A 240-amino-acid polypeptide reads, in one-letter code: Probable transcriptional regulatory protein MXAN_7062 (240 aa).

It belongs to the TACO1 family.

It localises to the cytoplasm. This is Probable transcriptional regulatory protein MXAN_7062 from Myxococcus xanthus (strain DK1622).